We begin with the raw amino-acid sequence, 417 residues long: UDP-N-acetylglucosamine 1-carboxyvinyltransferase (417 aa).

Position 22–23 (22–23) interacts with phosphoenolpyruvate; it reads KN. R93 is a binding site for UDP-N-acetyl-alpha-D-glucosamine. The active-site Proton donor is C117. C117 bears the 2-(S-cysteinyl)pyruvic acid O-phosphothioketal mark. UDP-N-acetyl-alpha-D-glucosamine is bound by residues 122 to 126, D305, and I327; that span reads RPVDQ.

The protein belongs to the EPSP synthase family. MurA subfamily.

It localises to the cytoplasm. The catalysed reaction is phosphoenolpyruvate + UDP-N-acetyl-alpha-D-glucosamine = UDP-N-acetyl-3-O-(1-carboxyvinyl)-alpha-D-glucosamine + phosphate. It participates in cell wall biogenesis; peptidoglycan biosynthesis. Its function is as follows. Cell wall formation. Adds enolpyruvyl to UDP-N-acetylglucosamine. In Chromobacterium violaceum (strain ATCC 12472 / DSM 30191 / JCM 1249 / CCUG 213 / NBRC 12614 / NCIMB 9131 / NCTC 9757 / MK), this protein is UDP-N-acetylglucosamine 1-carboxyvinyltransferase.